Here is a 504-residue protein sequence, read N- to C-terminus: MIVLTGHSLTIAEARRVIYDREPVAAALESMEAVRKSRAAVEQAIASGRTIYGVNTGFGKLADVRIDGSDLEQLQINLLRSHACAVGEPFAEEVVRAMLLLRANALLKGYSGIRPVVIERLLAFLNSGIHPIVPQQGSLGASGDLAPLAHLALALVGEGEVMYQGQRMPAIQALSQAGIPPLSLKEKEGLALINGTQAMTAMGVIAYLEAEQLAYDSEWIAALTIEALYGVIDAFDARIHEARGFLEQAEVAERLRRYLDGSQLITRQGERRVQDAYSIRCIPQVHGASLRALRYVKETLEIEMNAATDNPLIFADGAVLSGGNFHGQPVAIAMDLLKIAVAELANMSERRIERLVNPQLSEGLPPFLSPEPGLQSGAMIMQYVAASLVSENKTLAHPASVDSIPSSANQEDHVSMGTTAARHAYLIVQNVRKVLAIELICALQAVEERGIDQLAPSTSQLYHQARRIVPSIVADRVFSRDIEAVDAWLKQQAIRDRLAGGASV.

Positions 141–143 (ASG) form a cross-link, 5-imidazolinone (Ala-Gly). Serine 142 carries the 2,3-didehydroalanine (Ser) modification.

This sequence belongs to the PAL/histidase family. Post-translationally, contains an active site 4-methylidene-imidazol-5-one (MIO), which is formed autocatalytically by cyclization and dehydration of residues Ala-Ser-Gly.

It localises to the cytoplasm. It catalyses the reaction L-histidine = trans-urocanate + NH4(+). Its pathway is amino-acid degradation; L-histidine degradation into L-glutamate; N-formimidoyl-L-glutamate from L-histidine: step 1/3. The polypeptide is Histidine ammonia-lyase (Geobacillus thermodenitrificans (strain NG80-2)).